The primary structure comprises 102 residues: MATQKIRIRLKAYDSKLLDQSAGEIVETAKRTGAKVAGPIPLPTRINKFTVLRSPHVDKKSREQFEIRTHKRLLDILEPTQQTLDALMKLDLSAGVDVEIKS.

The protein belongs to the universal ribosomal protein uS10 family. Part of the 30S ribosomal subunit.

Functionally, involved in the binding of tRNA to the ribosomes. This chain is Small ribosomal subunit protein uS10, found in Myxococcus xanthus (strain DK1622).